The sequence spans 123 residues: Large ribosomal subunit protein uL18 (123 aa).

It belongs to the universal ribosomal protein uL18 family. As to quaternary structure, part of the 50S ribosomal subunit; part of the 5S rRNA/L5/L18/L25 subcomplex. Contacts the 5S and 23S rRNAs.

Its function is as follows. This is one of the proteins that bind and probably mediate the attachment of the 5S RNA into the large ribosomal subunit, where it forms part of the central protuberance. The protein is Large ribosomal subunit protein uL18 of Bifidobacterium longum (strain DJO10A).